Here is an 873-residue protein sequence, read N- to C-terminus: Putative receptor-like protein kinase At5g39000 (873 aa).

An N-terminal signal peptide occupies residues 1-21 (MIRHALLIFSILVSTPIVGEG). Residues 22–445 (ATSTYEPTDV…KNKSHILPIT (424 aa)) lie on the Extracellular side of the membrane. N-linked (GlcNAc...) asparagine glycans are attached at residues Asn-49, Asn-64, Asn-138, Asn-168, Asn-216, Asn-266, Asn-300, Asn-340, and Asn-437. Residues 446 to 466 (LAVVGSLVVLAMFVVGVLVIM) traverse the membrane as a helical segment. The Cytoplasmic segment spans residues 467-873 (KKKKKSKPST…FSEINEPKAR (407 aa)). A disordered region spans residues 472 to 494 (SKPSTNSSWCPLPHGTDSTNTKP). The 286-residue stretch at 518 to 803 (FEDKLIIGVG…EFALQLHETA (286 aa)) folds into the Protein kinase domain. ATP is bound by residues 524-532 (IGVGGFGSV) and Lys-547. Asp-646 serves as the catalytic Proton acceptor. The segment at 813 to 843 (LDLMPSGEVGTTTDGEDDLFSRTTGHVGKST) is disordered. Positions 833-843 (SRTTGHVGKST) are enriched in polar residues.

Belongs to the protein kinase superfamily. Ser/Thr protein kinase family.

The protein resides in the membrane. The protein is Putative receptor-like protein kinase At5g39000 of Arabidopsis thaliana (Mouse-ear cress).